The following is a 101-amino-acid chain: MIKSELVQRIAEHNPHLYQRDVENIVNAILEEIVAALARGDRVELRGFGAFSVKHRPARAGRNPRTGAHVPVDQKSVPFFKTGKEMRERLNRDHPDPGAAD.

The interval 57 to 101 (PARAGRNPRTGAHVPVDQKSVPFFKTGKEMRERLNRDHPDPGAAD) is disordered. Over residues 82–101 (TGKEMRERLNRDHPDPGAAD) the composition is skewed to basic and acidic residues.

This sequence belongs to the bacterial histone-like protein family. Heterodimer of an alpha and a beta chain.

Its function is as follows. This protein is one of the two subunits of integration host factor, a specific DNA-binding protein that functions in genetic recombination as well as in transcriptional and translational control. The protein is Integration host factor subunit beta of Bradyrhizobium diazoefficiens (strain JCM 10833 / BCRC 13528 / IAM 13628 / NBRC 14792 / USDA 110).